Consider the following 593-residue polypeptide: CTD kinase subunit alpha (593 aa).

Composition is skewed to polar residues over residues 1–17 and 29–51; these read MSYS…TEPN and QLSG…FKNN. Residues 1 to 262 are disordered; that stretch reads MSYSKSTIYR…ESVPAPLPSP (262 aa). Residues Ser56 and Ser58 each carry the phosphoserine modification. Basic residues predominate over residues 90 to 103; that stretch reads RSRKSRRRKGKKAF. A phosphoserine mark is found at Ser104 and Ser109. A compositionally biased stretch (low complexity) spans 139–152; that stretch reads SSSSASVSPISPSA. A compositionally biased stretch (polar residues) spans 160 to 170; sequence QASSFRRSPPS. The span at 198-215 shows a compositional bias: low complexity; the sequence is IPHETTSSDTQKKSSVSS. The Protein kinase domain maps to 277-561; the sequence is YEKIDQIGEG…AHETLMHEYF (285 aa). ATP-binding positions include 283 to 291 and Lys306; that span reads IGEGTYGKV. The Proton acceptor role is filled by Asp399.

The protein belongs to the protein kinase superfamily. CMGC Ser/Thr protein kinase family. CDC2/CDKX subfamily. As to quaternary structure, CTDK-I consists of three subunits, ctk1/lsk1, ctk2/lsc1 and ctk3 (also called alpha, beta and gamma). Interacts with ctk2/lsc1. This interaction is dependent on kinase activity.

The protein localises to the nucleus. Its subcellular location is the nucleolus. The catalysed reaction is [DNA-directed RNA polymerase] + ATP = phospho-[DNA-directed RNA polymerase] + ADP + H(+). Catalytic subunit of the CTDK-I complex, which hyperphosphorylates the C-terminal heptapeptide repeat domain (CTD) of the largest RNA polymerase II subunit. Involved in RNA polymerase II transcriptional elongation and pre-mRNA 3'-end processing. Together with ctk2/lsc1, required for the regulation of cytokinesis by phosphorylating 'Ser-2' residues found in the heptad repeats of the CTD. Required for nuclear localization of ctk2/lsc1. Positively regulates the septation initiation network (SIN) and promotes successful completion of cytokinesis in response to perturbation of the actomyosin ring. Acts in parallel to clp1 to promote actomyosin ring stability upon cytokinesis checkpoint activation. In Schizosaccharomyces pombe (strain 972 / ATCC 24843) (Fission yeast), this protein is CTD kinase subunit alpha.